Here is a 465-residue protein sequence, read N- to C-terminus: Botryococcus squalene synthase (465 aa).

Residues Arg48 and Arg73 each coordinate NADP(+). Mg(2+) contacts are provided by Asp76, Glu79, and Asp80. Residues Arg215, Lys315, and Arg317 each contribute to the NADP(+) site. Helical transmembrane passes span 395–415 (AIRLLLLVGVVAYFAYAFNLG) and 429–449 (ILDLSQKGLAVASVALLLLVL).

The protein belongs to the phytoene/squalene synthase family.

The protein localises to the membrane. The enzyme catalyses presqualene diphosphate + NADPH + H(+) = squalene + diphosphate + NADP(+). Produces squalene when coexpressed with SSL-1 and bisfarnesyl ether and a very small amount of squalene when incubated alone in the presence of NADPH. This chain is Botryococcus squalene synthase (SSL-2), found in Botryococcus braunii (Green alga).